The chain runs to 339 residues: Phosphate acyltransferase (339 aa).

Belongs to the PlsX family. In terms of assembly, homodimer. Probably interacts with PlsY.

The protein localises to the cytoplasm. The catalysed reaction is a fatty acyl-[ACP] + phosphate = an acyl phosphate + holo-[ACP]. It functions in the pathway lipid metabolism; phospholipid metabolism. Functionally, catalyzes the reversible formation of acyl-phosphate (acyl-PO(4)) from acyl-[acyl-carrier-protein] (acyl-ACP). This enzyme utilizes acyl-ACP as fatty acyl donor, but not acyl-CoA. This Tolumonas auensis (strain DSM 9187 / NBRC 110442 / TA 4) protein is Phosphate acyltransferase.